Consider the following 271-residue polypeptide: Type III pantothenate kinase (271 aa).

6–13 is an ATP binding site; the sequence is DVRNTHTV. 109–112 contributes to the substrate binding site; it reads GADR. D111 serves as the catalytic Proton acceptor. D131 provides a ligand contact to K(+). S134 provides a ligand contact to ATP. Residue T186 coordinates substrate.

This sequence belongs to the type III pantothenate kinase family. In terms of assembly, homodimer. Requires NH4(+) as cofactor. It depends on K(+) as a cofactor.

The protein localises to the cytoplasm. It catalyses the reaction (R)-pantothenate + ATP = (R)-4'-phosphopantothenate + ADP + H(+). It participates in cofactor biosynthesis; coenzyme A biosynthesis; CoA from (R)-pantothenate: step 1/5. Functionally, catalyzes the phosphorylation of pantothenate (Pan), the first step in CoA biosynthesis. The protein is Type III pantothenate kinase of Mycolicibacterium smegmatis (strain ATCC 700084 / mc(2)155) (Mycobacterium smegmatis).